We begin with the raw amino-acid sequence, 319 residues long: Curved DNA-binding protein (319 aa).

Positions 5-69 (DYYKILGVEP…QKRAEFDEIR (65 aa)) constitute a J domain.

It localises to the cytoplasm. The protein localises to the nucleoid. DNA-binding protein that preferentially recognizes a curved DNA sequence. It is probably a functional analog of DnaJ; displays overlapping activities with DnaJ, but functions under different conditions, probably acting as a molecular chaperone in an adaptive response to environmental stresses other than heat shock. Lacks autonomous chaperone activity; binds native substrates and targets them for recognition by DnaK. Its activity is inhibited by the binding of CbpM. The sequence is that of Curved DNA-binding protein from Pseudomonas putida (strain ATCC 700007 / DSM 6899 / JCM 31910 / BCRC 17059 / LMG 24140 / F1).